Here is a 118-residue protein sequence, read N- to C-terminus: MARIAGINIPDHKHAVIALTSIYGVGKTRSKAILAAAGIAEDVKISELSEGQIDTLRDEVAKFVVEGDLRREISMSIKRLMDLGCYRGLRHRRGLPVRGQRTKTNARTRKGPRKPIKK.

A disordered region spans residues 94–118 (GLPVRGQRTKTNARTRKGPRKPIKK).

The protein belongs to the universal ribosomal protein uS13 family. As to quaternary structure, part of the 30S ribosomal subunit. Forms a loose heterodimer with protein S19. Forms two bridges to the 50S subunit in the 70S ribosome.

In terms of biological role, located at the top of the head of the 30S subunit, it contacts several helices of the 16S rRNA. In the 70S ribosome it contacts the 23S rRNA (bridge B1a) and protein L5 of the 50S subunit (bridge B1b), connecting the 2 subunits; these bridges are implicated in subunit movement. Contacts the tRNAs in the A and P-sites. The polypeptide is Small ribosomal subunit protein uS13 (Shigella dysenteriae serotype 1 (strain Sd197)).